The following is a 365-amino-acid chain: UDP-N-acetylglucosamine--N-acetylmuramyl-(pentapeptide) pyrophosphoryl-undecaprenol N-acetylglucosamine transferase (365 aa).

UDP-N-acetyl-alpha-D-glucosamine contacts are provided by residues 17 to 19 (TGG), N129, R167, S194, I250, 269 to 274 (ALTVSE), and Q295.

It belongs to the glycosyltransferase 28 family. MurG subfamily.

The protein resides in the cell inner membrane. It carries out the reaction di-trans,octa-cis-undecaprenyl diphospho-N-acetyl-alpha-D-muramoyl-L-alanyl-D-glutamyl-meso-2,6-diaminopimeloyl-D-alanyl-D-alanine + UDP-N-acetyl-alpha-D-glucosamine = di-trans,octa-cis-undecaprenyl diphospho-[N-acetyl-alpha-D-glucosaminyl-(1-&gt;4)]-N-acetyl-alpha-D-muramoyl-L-alanyl-D-glutamyl-meso-2,6-diaminopimeloyl-D-alanyl-D-alanine + UDP + H(+). It functions in the pathway cell wall biogenesis; peptidoglycan biosynthesis. Functionally, cell wall formation. Catalyzes the transfer of a GlcNAc subunit on undecaprenyl-pyrophosphoryl-MurNAc-pentapeptide (lipid intermediate I) to form undecaprenyl-pyrophosphoryl-MurNAc-(pentapeptide)GlcNAc (lipid intermediate II). This chain is UDP-N-acetylglucosamine--N-acetylmuramyl-(pentapeptide) pyrophosphoryl-undecaprenol N-acetylglucosamine transferase, found in Shewanella halifaxensis (strain HAW-EB4).